We begin with the raw amino-acid sequence, 290 residues long: Inactive tau-tubulin kinase ttbk-6 (290 aa).

Positions 1 to 240 (MEDHVLKKLN…FWQVMENEKI (240 aa)) constitute a Protein kinase domain. Disordered regions lie at residues 244–263 (SKFD…AAWE) and 268–290 (RYFQ…DFVL).

The protein belongs to the protein kinase superfamily. CK1 Ser/Thr protein kinase family.

This chain is Inactive tau-tubulin kinase ttbk-6, found in Caenorhabditis elegans.